The chain runs to 603 residues: Prostaglandin G/H synthase 2 (603 aa).

The signal sequence occupies residues 1–17; the sequence is MLLPCALLAALLAAGHA. Residues 18–55 enclose the EGF-like domain; that stretch reads ANPCCSLPCQNRGVCMTTGFDRYECDCTRTGYYGENCT. Cystine bridges form between Cys21–Cys32, Cys22–Cys145, Cys26–Cys42, and Cys44–Cys54. N-linked (GlcNAc...) asparagine glycans are attached at residues Asn53 and Asn90. Arg106 is a binding site for substrate. The N-linked (GlcNAc...) asparagine glycan is linked to Asn130. Residue His193 is the Proton acceptor of the active site. Substrate is bound at residue Tyr341. Tyr371 serves as the catalytic For cyclooxygenase activity. His374 serves as a coordination point for heme b. Cysteines 555 and 561 form a disulfide.

The protein belongs to the prostaglandin G/H synthase family. As to quaternary structure, homodimer. Heme b is required as a cofactor.

The protein localises to the microsome membrane. Its subcellular location is the endoplasmic reticulum membrane. It carries out the reaction (5Z,8Z,11Z,14Z)-eicosatetraenoate + AH2 + 2 O2 = prostaglandin H2 + A + H2O. It catalyses the reaction (9Z,12Z)-octadecadienoate + AH2 + O2 = (9R)-hydroxy-(10E,12Z)-octadecadienoate + A + H2O. The catalysed reaction is (9Z,12Z)-octadecadienoate + AH2 + O2 = (9S)-hydroxy-(10E,12Z)-octadecadienoate + A + H2O. The enzyme catalyses (9Z,12Z)-octadecadienoate + AH2 + O2 = (13S)-hydroxy-(9Z,11E)-octadecadienoate + A + H2O. It carries out the reaction (9Z,12Z)-octadecadienoate + AH2 + O2 = (13R)-hydroxy-(9Z,11E)-octadecadienoate + A + H2O. It participates in lipid metabolism; prostaglandin biosynthesis. Its function is as follows. Dual cyclooxygenase and peroxidase in the biosynthesis pathway of prostanoids, a class of C20 oxylipins mainly derived from arachidonate ((5Z,8Z,11Z,14Z)-eicosatetraenoate, AA, C20:4(n-6)), with a particular role in the inflammatory response. The cyclooxygenase activity oxygenates AA to the hydroperoxy endoperoxide prostaglandin G2 (PGG2), and the peroxidase activity reduces PGG2 to the hydroxy endoperoxide prostaglandin H2 (PGH2), the precursor of all 2-series prostaglandins and thromboxanes. This complex transformation is initiated by abstraction of hydrogen at carbon 13 (with S-stereochemistry), followed by insertion of molecular O2 to form the endoperoxide bridge between carbon 9 and 11 that defines prostaglandins. The insertion of a second molecule of O2 (bis-oxygenase activity) yields a hydroperoxy group in PGG2 that is then reduced to PGH2 by two electrons. Similarly catalyzes successive cyclooxygenation and peroxidation of dihomo-gamma-linoleate (DGLA, C20:3(n-6)) and eicosapentaenoate (EPA, C20:5(n-3)) to corresponding PGH1 and PGH3, the precursors of 1- and 3-series prostaglandins. In an alternative pathway of prostanoid biosynthesis, converts 2-arachidonoyl lysophopholipids to prostanoid lysophopholipids, which are then hydrolyzed by intracellular phospholipases to release free prostanoids. Metabolizes 2-arachidonoyl glycerol yielding the glyceryl ester of PGH2, a process that can contribute to pain response. Generates lipid mediators from n-3 and n-6 polyunsaturated fatty acids (PUFAs) via a lipoxygenase-type mechanism. Oxygenates PUFAs to hydroperoxy compounds and then reduces them to corresponding alcohols. Plays a role in the generation of resolution phase interaction products (resolvins) during both sterile and infectious inflammation. Metabolizes docosahexaenoate (DHA, C22:6(n-3)) to 17R-HDHA, a precursor of the D-series resolvins (RvDs). As a component of the biosynthetic pathway of E-series resolvins (RvEs), converts eicosapentaenoate (EPA, C20:5(n-3)) primarily to 18S-HEPE that is further metabolized by ALOX5 and LTA4H to generate 18S-RvE1 and 18S-RvE2. In vascular endothelial cells, converts docosapentaenoate (DPA, C22:5(n-3)) to 13R-HDPA, a precursor for 13-series resolvins (RvTs) shown to activate macrophage phagocytosis during bacterial infection. In activated leukocytes, contributes to oxygenation of hydroxyeicosatetraenoates (HETE) to diHETES (5,15-diHETE and 5,11-diHETE). Can also use linoleate (LA, (9Z,12Z)-octadecadienoate, C18:2(n-6)) as substrate and produce hydroxyoctadecadienoates (HODEs) in a regio- and stereospecific manner, being (9R)-HODE ((9R)-hydroxy-(10E,12Z)-octadecadienoate) and (13S)-HODE ((13S)-hydroxy-(9Z,11E)-octadecadienoate) its major products. During neuroinflammation, plays a role in neuronal secretion of specialized preresolving mediators (SPMs) 15R-lipoxin A4 that regulates phagocytic microglia. The sequence is that of Prostaglandin G/H synthase 2 (PTGS2) from Gallus gallus (Chicken).